Consider the following 443-residue polypeptide: Serine/threonine-protein phosphatase 2A 55 kDa regulatory subunit B beta isoform (443 aa).

WD repeat units lie at residues 22–61, 87–128, 171–209, 220–260, 279–317, 334–375, and 410–443; these read TEADIISTVEFNSTGELLATGDKGGRVVIFQREQENKNQP, EIEE…KRPE, AHTYHINSISVNSDYETYMSADDLRINLWNLEITNRSFN, ELTE…LCDR, EIISSISDVKFNHSGRYIMTRDYLTVKVWDLNMENRPIE, ENDC…DVTL, and DFSKKILHTAWHPSENIIAVAATNNLYIFQDKVN.

It belongs to the phosphatase 2A regulatory subunit B family. As to quaternary structure, PP2A consists of a common heterodimeric core enzyme, composed of a 36 kDa catalytic subunit (subunit C) and a 65 kDa constant regulatory subunit (PR65 or subunit A), that associates with a variety of regulatory subunits.

The protein resides in the cytoplasm. It is found in the cytoskeleton. The protein localises to the membrane. Its function is as follows. The B regulatory subunit might modulate substrate selectivity and catalytic activity, and might also direct the localization of the catalytic enzyme to a particular subcellular compartment. Negatively controls the initiation of oocyte maturation. This Xenopus tropicalis (Western clawed frog) protein is Serine/threonine-protein phosphatase 2A 55 kDa regulatory subunit B beta isoform (ppp2r2b).